The chain runs to 161 residues: Nucleotide-binding protein LHK_01423 (161 aa).

Belongs to the YajQ family.

Nucleotide-binding protein. In Laribacter hongkongensis (strain HLHK9), this protein is Nucleotide-binding protein LHK_01423.